Reading from the N-terminus, the 741-residue chain is Penicillin-binding protein 1B (741 aa).

At 1 to 12 (MYPVNLKLSIKF) the chain is on the cytoplasmic side. A helical; Signal-anchor for type II membrane protein membrane pass occupies residues 13-33 (LFYFFLYFLLIIIIYGVYLYF). The Extracellular portion of the chain corresponds to 34–741 (KINQVIHGKI…WIRNHNIFCT (708 aa)). Positions 139–311 (LRLDPQLIAM…SLYNPWNNPV (173 aa)) are transglycosylase. Glu-177 (proton donor; for transglycosylase activity) is an active-site residue. Residues 395–687 (ENAIRHGIQQ…STGAMKIYHN (293 aa)) form a transpeptidase region. The active-site Acyl-ester intermediate; for transpeptidase activity is the Ser-454.

This sequence in the N-terminal section; belongs to the glycosyltransferase 51 family. In the C-terminal section; belongs to the transpeptidase family.

It localises to the cell membrane. It catalyses the reaction [GlcNAc-(1-&gt;4)-Mur2Ac(oyl-L-Ala-gamma-D-Glu-L-Lys-D-Ala-D-Ala)](n)-di-trans,octa-cis-undecaprenyl diphosphate + beta-D-GlcNAc-(1-&gt;4)-Mur2Ac(oyl-L-Ala-gamma-D-Glu-L-Lys-D-Ala-D-Ala)-di-trans,octa-cis-undecaprenyl diphosphate = [GlcNAc-(1-&gt;4)-Mur2Ac(oyl-L-Ala-gamma-D-Glu-L-Lys-D-Ala-D-Ala)](n+1)-di-trans,octa-cis-undecaprenyl diphosphate + di-trans,octa-cis-undecaprenyl diphosphate + H(+). The enzyme catalyses Preferential cleavage: (Ac)2-L-Lys-D-Ala-|-D-Ala. Also transpeptidation of peptidyl-alanyl moieties that are N-acyl substituents of D-alanine.. It functions in the pathway cell wall biogenesis; peptidoglycan biosynthesis. Its function is as follows. Cell wall formation. Synthesis of cross-linked peptidoglycan from the lipid intermediates. The enzyme has a penicillin-insensitive transglycosylase N-terminal domain (formation of linear glycan strands) and a penicillin-sensitive transpeptidase C-terminal domain (cross-linking of the peptide subunits). The polypeptide is Penicillin-binding protein 1B (mrcB) (Buchnera aphidicola subsp. Baizongia pistaciae (strain Bp)).